The chain runs to 379 residues: Odorant receptor 33b (379 aa).

Residues 1 to 37 (MDLKPRVIRSEDIYRTYWLYWHLLGLESNFFLNRLLD) lie on the Cytoplasmic side of the membrane. A helical membrane pass occupies residues 38 to 58 (LVITIFVTIWYPIHLILGLFM). The Extracellular segment spans residues 59-64 (ERSLGD). Residues 65-85 (VCKGLPITAACFFASFKFICF) traverse the membrane as a helical segment. Topologically, residues 86 to 129 (RFKLSEIKEIEILFKELDQRALSREECEFFNQNTRREANFIWKS) are cytoplasmic. Residues 130-150 (FIVAYGLSNISAIASVLFGGG) form a helical membrane-spanning segment. Over 151 to 165 (HKLLYPAWFPYDVQA) the chain is Extracellular. The helical transmembrane segment at 166–186 (TELIFWLSVTYQIAGVSLAIL) threads the bilayer. At 187 to 256 (QNLANDSYPP…LLRSTMNISQ (70 aa)) the chain is on the cytoplasmic side. Residues 257-277 (LGQFISSGVNISITLVNILFF) form a helical membrane-spanning segment. At 278–281 (ADNN) the chain is on the extracellular side. Residues 282-302 (FAITYYGVYFLSMVLELFPCC) traverse the membrane as a helical segment. Residues 303 to 355 (YYGTLISVEMNQLTYAIYSSNWMSMNRSYSRILLIFMQLTLAEVQIKAGGMIG) lie on the Cytoplasmic side of the membrane. The chain crosses the membrane as a helical span at residues 356-376 (IGMNAFFATVRLAYSFFTLAM). Over 377-379 (SLR) the chain is Extracellular.

The protein belongs to the insect chemoreceptor superfamily. Heteromeric odorant receptor channel (TC 1.A.69) family. Or2a subfamily. In terms of assembly, interacts with Orco. Complexes exist early in the endomembrane system in olfactory sensory neurons (OSNs), coupling these complexes to the conserved ciliary trafficking pathway. In terms of tissue distribution, expressed in 15 cells in the antenna but not the maxillary palp.

The protein resides in the cell membrane. Its function is as follows. Odorant receptor which mediates acceptance or avoidance behavior, depending on its substrates. The odorant receptor repertoire encodes a large collection of odor stimuli that vary widely in identity, intensity, and duration. May form a complex with Orco to form odorant-sensing units, providing sensitive and prolonged odorant signaling and calcium permeability. Involved in the behavioral responses to pentyl acetate and pyrazines. In Drosophila melanogaster (Fruit fly), this protein is Odorant receptor 33b (Or33b).